Consider the following 253-residue polypeptide: MYLFIYIFFFFFFFFFFVIVQKDIEQLDIKCAHEQMNIQKQYDEKKKPLFEKRDEIIQKIPGFWANTLRKHPALSDIVPEDIDILNHLVKLDLKDNMDNNGSYKITFIFGEKAKEFMEPLTLVKHVTFDNNQEKVVECTRIKWKEGKNPIAAVTHNRSDLDNEIPKWSIFEWFTTDELQDKPDVGELIRREIWHNPLSYYLGLEEFDEFDDDFDEEFDDDDDDDDDDDDDDDDDDKDDDLDGDDDGNNDDNDD.

The N-terminal stretch at 1 to 22 (MYLFIYIFFFFFFFFFFVIVQK) is a signal peptide. Residues 211-253 (DDFDEEFDDDDDDDDDDDDDDDDDDKDDDLDGDDDGNNDDNDD) are disordered.

Belongs to the nucleosome assembly protein (NAP) family.

In Plasmodium falciparum (isolate fcm17 / Senegal), this protein is Aspartic acid-rich protein.